Consider the following 588-residue polypeptide: ATP-dependent lipid A-core flippase (588 aa).

6 helical membrane-spanning segments follow: residues 23–43 (FWPV…IDAG), 56–76 (FITI…IGIT), 141–161 (DALT…TVMM), 162–182 (VICW…GIIV), 257–277 (LVIA…STVI), and 278–298 (TISA…IKPM). Residues 28 to 310 (LLGVLANILY…LTTLNATIQR (283 aa)) form the ABC transmembrane type-1 domain. Positions 342–576 (IEFKHVYHAY…DGHYAQLYKV (235 aa)) constitute an ABC transporter domain. 375-382 (GHSGSGKT) lines the ATP pocket.

This sequence belongs to the ABC transporter superfamily. Lipid exporter (TC 3.A.1.106) family. As to quaternary structure, homodimer.

It is found in the cell inner membrane. It catalyses the reaction ATP + H2O + lipid A-core oligosaccharideSide 1 = ADP + phosphate + lipid A-core oligosaccharideSide 2.. Its function is as follows. Involved in lipopolysaccharide (LPS) biosynthesis. Translocates lipid A-core from the inner to the outer leaflet of the inner membrane. Transmembrane domains (TMD) form a pore in the inner membrane and the ATP-binding domain (NBD) is responsible for energy generation. This Legionella pneumophila subsp. pneumophila (strain Philadelphia 1 / ATCC 33152 / DSM 7513) protein is ATP-dependent lipid A-core flippase.